We begin with the raw amino-acid sequence, 241 residues long: 15,16-dihydrobiliverdin:ferredoxin oxidoreductase (241 aa).

The interval 16–35 (RGGQPAAVPEGLEHCHSSKS) is disordered.

The protein belongs to the HY2 family.

The enzyme catalyses 15,16-dihydrobiliverdin + oxidized 2[4Fe-4S]-[ferredoxin] = biliverdin IXalpha + reduced 2[4Fe-4S]-[ferredoxin] + 2 H(+). Catalyzes the two-electron reduction of biliverdin IX-alpha at the C15 methine bridge. This is 15,16-dihydrobiliverdin:ferredoxin oxidoreductase from Synechococcus sp. (strain WH7803).